A 203-amino-acid polypeptide reads, in one-letter code: Recombination protein RecR (203 aa).

The C4-type zinc finger occupies 56-71; it reads CAVCGNVSDDERCRIC. The region spanning 79 to 179 is the Toprim domain; it reads ALVCVVEEPK…TVTRIASGLP (101 aa).

The protein belongs to the RecR family.

In terms of biological role, may play a role in DNA repair. It seems to be involved in an RecBC-independent recombinational process of DNA repair. It may act with RecF and RecO. The protein is Recombination protein RecR of Mycobacterium ulcerans (strain Agy99).